Here is a 461-residue protein sequence, read N- to C-terminus: Elongation factor 1-alpha, oocyte form (461 aa).

A N,N,N-trimethylglycine modification is found at glycine 2. One can recognise a tr-type G domain in the interval lysine 5–threonine 242. A G1 region spans residues glycine 14–serine 21. Position 14–21 (glycine 14–serine 21) interacts with GTP. The tract at residues glycine 70 to aspartate 74 is G2. The interval aspartate 91–glycine 94 is G3. Residues aspartate 91 to histidine 95 and asparagine 153 to aspartate 156 each bind GTP. The segment at asparagine 153–aspartate 156 is G4. The tract at residues serine 194 to tryptophan 196 is G5. 5-glutamyl glycerylphosphorylethanolamine is present on residues glutamate 301 and glutamate 374.

Belongs to the TRAFAC class translation factor GTPase superfamily. Classic translation factor GTPase family. EF-Tu/EF-1A subfamily. Oocyte.

It localises to the cytoplasm. Its function is as follows. This protein promotes the GTP-dependent binding of aminoacyl-tRNA to the A-site of ribosomes during protein biosynthesis. The protein is Elongation factor 1-alpha, oocyte form of Xenopus laevis (African clawed frog).